We begin with the raw amino-acid sequence, 73 residues long: Disintegrin trigramin-gamma (73 aa).

Positions 1 to 73 (EAGEDCDCGS…AGCPRNPLHA (73 aa)) constitute a Disintegrin domain. Disulfide bonds link Cys-6–Cys-21, Cys-8–Cys-16, Cys-15–Cys-38, Cys-29–Cys-35, Cys-34–Cys-59, and Cys-47–Cys-66. The short motif at 51–53 (RGD) is the Cell attachment site element.

This sequence belongs to the venom metalloproteinase (M12B) family. P-II subfamily. P-IIa sub-subfamily. In terms of assembly, monomer (disintegrin). Expressed by the venom gland.

The protein localises to the secreted. Inhibits fibrinogen interaction with platelets. Acts by binding to alpha-IIb/beta-3 (ITGA2B/ITGB3) on the platelet surface and inhibits aggregation induced by ADP, thrombin, platelet-activating factor and collagen. This chain is Disintegrin trigramin-gamma, found in Craspedocephalus gramineus (Bamboo pit viper).